A 444-amino-acid polypeptide reads, in one-letter code: Cortexillin-1 (444 aa).

The interval 1 to 227 (MAGKDWEIVQ…VLYTSLFFHA (227 aa)) is actin-binding. 2 consecutive Calponin-homology (CH) domains span residues 8-115 (IVQE…RKYR) and 124-229 (KSSE…HAYR). Coiled coils occupy residues 227 to 352 (AYRA…TRIR) and 410 to 434 (LATKLEAENLAIMKLLNQKEDDLKA).

The protein belongs to the cortexillin family. Homodimer; parallel.

It is found in the cytoplasm. The protein localises to the cytoskeleton. Actin-bundling protein. When linked to F-actin the actin filaments form preferentially anti-parallel bundles that associate into meshworks. Plays a major role in cytokinesis. Negatively regulates cortical localization of rapgap1. The sequence is that of Cortexillin-1 (ctxA) from Dictyostelium discoideum (Social amoeba).